The sequence spans 425 residues: Dihydroorotase (425 aa).

The Zn(2+) site is built by H60 and H62. Substrate contacts are provided by residues 62–64 (HLR) and N94. Residues D152, H179, and H232 each contribute to the Zn(2+) site. N278 is a binding site for substrate. Residue D305 coordinates Zn(2+). The active site involves D305. Substrate is bound at residue H309.

This sequence belongs to the metallo-dependent hydrolases superfamily. DHOase family. Class I DHOase subfamily. Zn(2+) serves as cofactor.

It carries out the reaction (S)-dihydroorotate + H2O = N-carbamoyl-L-aspartate + H(+). The protein operates within pyrimidine metabolism; UMP biosynthesis via de novo pathway; (S)-dihydroorotate from bicarbonate: step 3/3. In terms of biological role, catalyzes the reversible cyclization of carbamoyl aspartate to dihydroorotate. This Syntrophotalea carbinolica (strain DSM 2380 / NBRC 103641 / GraBd1) (Pelobacter carbinolicus) protein is Dihydroorotase.